Consider the following 238-residue polypeptide: Beta-glucanase (238 aa).

An N-terminal signal peptide occupies residues 1-26 (MMKKKSWFTLMITGVISLFFSVSAFA). Residues 29-238 (VFWEPLSYFN…EYDWVKYTSN (210 aa)) form the GH16 domain. An intrachain disulfide couples C56 to C85. Residue E129 is the Nucleophile of the active site. Residue E133 is the Proton donor of the active site.

Belongs to the glycosyl hydrolase 16 family.

It carries out the reaction Hydrolysis of (1-&gt;4)-beta-D-glucosidic linkages in beta-D-glucans containing (1-&gt;3)- and (1-&gt;4)-bonds.. The protein is Beta-glucanase (gluB) of Paenibacillus polymyxa (Bacillus polymyxa).